The chain runs to 496 residues: Adenosine transporter 1 (496 aa).

At 1–26 the chain is on the cytoplasmic side; sequence MSSHTSTPNHASAAPPRKWYDMTSAE. The chain crosses the membrane as a helical span at residues 27 to 47; that stretch reads FYVYVVAFMCGISMLMPINAV. Residues 48-77 lie on the Extracellular side of the membrane; sequence FSAPSYMLQYYLYATKDPNHVPQMTNFWSN. Residues 78 to 98 traverse the membrane as a helical segment; sequence VMTYYNLIGLVTGLVMEPLTL. Residues 99-107 lie on the Cytoplasmic side of the membrane; it reads LKSFRKIPM. Residues 108–128 traverse the membrane as a helical segment; sequence LVRLLGGLCILIVEIIVLMAV. The Extracellular segment spans residues 129–135; the sequence is PARGTTE. A helical transmembrane segment spans residues 136-156; the sequence is GGAVATMCIAGFIGGLGKSIF. Residues 157-172 lie on the Cytoplasmic side of the membrane; the sequence is ESTVYGMFGAFPPSFT. A helical membrane pass occupies residues 173 to 193; sequence SIMMGGVGISGVLTSLIQIIV. Topologically, residues 194 to 208 are extracellular; sequence KAALPDTYEGVKKQS. The chain crosses the membrane as a helical span at residues 209–229; sequence YIYYSLDVGIQAATFIALIMM. Residues 230–336 are Cytoplasmic-facing; that stretch reads RFNSFAQLHF…SIISVLRSIK (107 aa). Residues 337–357 form a helical membrane-spanning segment; it reads WMFVSCAFVFVVTLFLFPGIA. Over 358–365 the chain is Extracellular; sequence TGMFPESK. A helical membrane pass occupies residues 366–386; sequence WFATVAVFIFNCCDVLGRVAP. Residues 387 to 399 lie on the Cytoplasmic side of the membrane; sequence ALRFMWPRSYNQR. The helical transmembrane segment at 400–420 threads the bilayer; the sequence is WIIVAASFARVIFVPLLLLYS. Residues 421 to 431 are Extracellular-facing; that stretch reads YHYIPSEAYGY. The chain crosses the membrane as a helical span at residues 432–452; the sequence is VIMVIFGFSSGYVASMSLTLG. Residues 453–464 lie on the Cytoplasmic side of the membrane; the sequence is PQSKGIDNDGKR. The chain crosses the membrane as a helical span at residues 465–485; that stretch reads FVAGTLMGISILVGGTIGTVL. Over 486–496 the chain is Extracellular; sequence SIMTQTIREKY.

This sequence belongs to the SLC29A/ENT transporter (TC 2.A.57) family.

It localises to the membrane. It carries out the reaction adenosine(in) = adenosine(out). Its function is as follows. Adenosine transporter. The chain is Adenosine transporter 1 from Crithidia fasciculata.